Reading from the N-terminus, the 206-residue chain is MDRLLVLVRHGQSEWNLKNLFTGWRDPNLTDQGVSEARRAGALLAAEGLSFDVAYTSALTRAQRTCQLVLEEMGLTGLRTIADQALNERDYGDLSGLNKDDARAKFGEEQVHVWRRSYDISPPGGESLRDTVARVLPYFVQEILPSVLRGERTLVAAHGNSLRALVMVLERLSPEGIMKRELATGAPILYRLGADATVSEKRDILI.

Residues 9–16 (RHGQSEWN), 22–23 (TG), arginine 61, 88–91 (ERDY), lysine 99, 115–116 (RR), and 159–160 (GN) each bind substrate. Histidine 10 acts as the Tele-phosphohistidine intermediate in catalysis. Residue glutamate 88 is the Proton donor/acceptor of the active site.

This sequence belongs to the phosphoglycerate mutase family. BPG-dependent PGAM subfamily. As to quaternary structure, homodimer.

It carries out the reaction (2R)-2-phosphoglycerate = (2R)-3-phosphoglycerate. The protein operates within carbohydrate degradation; glycolysis; pyruvate from D-glyceraldehyde 3-phosphate: step 3/5. In terms of biological role, catalyzes the interconversion of 2-phosphoglycerate and 3-phosphoglycerate. The sequence is that of 2,3-bisphosphoglycerate-dependent phosphoglycerate mutase from Azorhizobium caulinodans (strain ATCC 43989 / DSM 5975 / JCM 20966 / LMG 6465 / NBRC 14845 / NCIMB 13405 / ORS 571).